A 192-amino-acid polypeptide reads, in one-letter code: Adenylate kinase (192 aa).

Position 12-17 (12-17) interacts with ATP; that stretch reads GSGKTT. Positions 34 to 63 are NMP; that stretch reads STGDLLRAEVASGSELGKTIDSFISKGNLV. AMP is bound by residues T35, R40, 61 to 63, 88 to 91, and Q95; these read NLV and GYPR. Residues 130 to 136 are LID; that stretch reads GRNRGAD. An ATP-binding site is contributed by R131. Positions 133 and 145 each coordinate AMP. An ATP-binding site is contributed by R173.

It belongs to the adenylate kinase family. Monomer.

The protein localises to the cytoplasm. The catalysed reaction is AMP + ATP = 2 ADP. It participates in purine metabolism; AMP biosynthesis via salvage pathway; AMP from ADP: step 1/1. Its function is as follows. Catalyzes the reversible transfer of the terminal phosphate group between ATP and AMP. Plays an important role in cellular energy homeostasis and in adenine nucleotide metabolism. The protein is Adenylate kinase of Campylobacter jejuni subsp. jejuni serotype O:2 (strain ATCC 700819 / NCTC 11168).